Here is a 159-residue protein sequence, read N- to C-terminus: Serine-protein kinase RsbW (159 aa).

The protein belongs to the anti-sigma-factor family.

The enzyme catalyses L-seryl-[protein] + ATP = O-phospho-L-seryl-[protein] + ADP + H(+). The catalysed reaction is L-threonyl-[protein] + ATP = O-phospho-L-threonyl-[protein] + ADP + H(+). Functionally, negative regulator of sigma-B activity. Phosphorylates and inactivates its specific antagonist protein, RsbV. Upon phosphorylation of RsbV, RsbW is released and binds to sigma-B, thereby blocking its ability to form an RNA polymerase holoenzyme (E-sigma-B). This is Serine-protein kinase RsbW from Staphylococcus epidermidis.